A 409-amino-acid polypeptide reads, in one-letter code: Bone morphogenetic protein 4 (409 aa).

The signal sequence occupies residues 1–19; that stretch reads MIPGNRMLMVVLLCQVLLG. Positions 20–293 are excised as a propeptide; that stretch reads GASHASLIPE…ALTRRRRAKR (274 aa). Residue serine 91 is modified to Phosphoserine. N-linked (GlcNAc...) asparagine glycans are attached at residues asparagine 144 and asparagine 209. The interval 284–308 is disordered; it reads ALTRRRRAKRSPKHHPQRARKKNKN. Cystine bridges form between cysteine 309/cysteine 374, cysteine 338/cysteine 406, and cysteine 342/cysteine 408. Asparagine 351 and asparagine 366 each carry an N-linked (GlcNAc...) asparagine glycan.

Belongs to the TGF-beta family. As to quaternary structure, homodimer; disulfide-linked. Interacts with GREM2. Part of a complex consisting of TWSG1 and CHRD. Interacts with the serine proteases, HTRA1 and HTRA3; the interaction with either inhibits BMP4-mediated signaling. The HTRA protease activity is required for this inhibition. Interacts with SOSTDC1. Interacts with FBN1 (via N-terminal domain) and FBN2. Interacts with type I receptor BMPR1A. Interacts with type II receptor BMPR2. Interacts with FSTL1; this interaction inhibits the activation of the BMP4/Smad1/5/8 signaling pathway. Interacts with TGFBR3.

It localises to the secreted. The protein localises to the extracellular space. Its subcellular location is the extracellular matrix. In terms of biological role, growth factor of the TGF-beta superfamily that plays essential roles in many developmental processes, including neurogenesis, vascular development, angiogenesis and osteogenesis. Acts in concert with PTHLH/PTHRP to stimulate ductal outgrowth during embryonic mammary development and to inhibit hair follicle induction. Initiates the canonical BMP signaling cascade by associating with type I receptor BMPR1A and type II receptor BMPR2. Once all three components are bound together in a complex at the cell surface, BMPR2 phosphorylates and activates BMPR1A. In turn, BMPR1A propagates signal by phosphorylating SMAD1/5/8 that travel to the nucleus and act as activators and repressors of transcription of target genes. Positively regulates the expression of odontogenic development regulator MSX1 via inducing the IPO7-mediated import of SMAD1 to the nucleus. Required for MSX1-mediated mesenchymal molar tooth bud development beyond the bud stage, via promoting Wnt signaling. Acts as a positive regulator of odontoblast differentiation during mesenchymal tooth germ formation, expression is repressed during the bell stage by MSX1-mediated inhibition of CTNNB1 signaling. Able to induce its own expression in dental mesenchymal cells and also in the neighboring dental epithelial cells via an MSX1-mediated pathway. Can also signal through non-canonical BMP pathways such as ERK/MAP kinase, PI3K/Akt, or SRC cascades. For example, induces SRC phosphorylation which, in turn, activates VEGFR2, leading to an angiogenic response. The sequence is that of Bone morphogenetic protein 4 from Suncus murinus (Asian house shrew).